Here is a 333-residue protein sequence, read N- to C-terminus: Phosphoribosylformylglycinamidine cyclo-ligase (333 aa).

The protein belongs to the AIR synthase family.

The protein resides in the cytoplasm. It carries out the reaction 2-formamido-N(1)-(5-O-phospho-beta-D-ribosyl)acetamidine + ATP = 5-amino-1-(5-phospho-beta-D-ribosyl)imidazole + ADP + phosphate + H(+). It participates in purine metabolism; IMP biosynthesis via de novo pathway; 5-amino-1-(5-phospho-D-ribosyl)imidazole from N(2)-formyl-N(1)-(5-phospho-D-ribosyl)glycinamide: step 2/2. The chain is Phosphoribosylformylglycinamidine cyclo-ligase from Methanococcoides burtonii (strain DSM 6242 / NBRC 107633 / OCM 468 / ACE-M).